A 347-amino-acid polypeptide reads, in one-letter code: Haptoglobin (347 aa).

A signal peptide spans Met-1–Ala-18. A Sushi domain is found at Asp-31–Ala-88. Disulfide bonds link Cys-52-Cys-86, Cys-90-Cys-207, Cys-250-Cys-281, and Cys-292-Cys-322. The Peptidase S1 domain maps to Ile-103–Asn-347. N-linked (GlcNAc...) asparagine glycans are attached at residues Asn-125, Asn-148, Asn-152, and Asn-182. The interval Val-259 to Thr-264 is interaction with CD163.

This sequence belongs to the peptidase S1 family. As to quaternary structure, tetramer of two alpha and two beta chains; disulfide-linked. The hemoglobin/haptoglobin complex is composed of a haptoglobin dimer bound to two hemoglobin alpha-beta dimers. Interacts with CD163. Interacts with ERGIC3.

The protein resides in the secreted. As a result of hemolysis, hemoglobin is found to accumulate in the kidney and is secreted in the urine. Haptoglobin captures, and combines with free plasma hemoglobin to allow hepatic recycling of heme iron and to prevent kidney damage. Haptoglobin also acts as an antioxidant, has antibacterial activity and plays a role in modulating many aspects of the acute phase response. Hemoglobin/haptoglobin complexes are rapidly cleared by the macrophage CD163 scavenger receptor expressed on the surface of liver Kupfer cells through an endocytic lysosomal degradation pathway. The polypeptide is Haptoglobin (HP) (Pongo abelii (Sumatran orangutan)).